The chain runs to 298 residues: GTPase Era (298 aa).

The Era-type G domain occupies 3–170 (KSGFVTIVGR…VELMKKAMPE (168 aa)). The tract at residues 11 to 18 (GRPNVGKS) is G1. Residue 11-18 (GRPNVGKS) participates in GTP binding. The G2 stretch occupies residues 37–41 (QTTRN). Residues 58–61 (DTPG) form a G3 region. GTP-binding positions include 58–62 (DTPGI) and 120–123 (NKVD). The tract at residues 120–123 (NKVD) is G4. The tract at residues 149–151 (ISA) is G5. A KH type-2 domain is found at 201 to 278 (LRDEVPHGIA…NLKIWVKVRK (78 aa)).

This sequence belongs to the TRAFAC class TrmE-Era-EngA-EngB-Septin-like GTPase superfamily. Era GTPase family. As to quaternary structure, monomer.

The protein resides in the cytoplasm. It localises to the cell membrane. Functionally, an essential GTPase that binds both GDP and GTP, with rapid nucleotide exchange. Plays a role in 16S rRNA processing and 30S ribosomal subunit biogenesis and possibly also in cell cycle regulation and energy metabolism. This chain is GTPase Era, found in Clostridium beijerinckii (strain ATCC 51743 / NCIMB 8052) (Clostridium acetobutylicum).